A 760-amino-acid polypeptide reads, in one-letter code: Xaa-Pro dipeptidyl-peptidase (760 aa).

Active-site charge relay system residues include Ser-349, Asp-469, and His-499.

This sequence belongs to the peptidase S15 family. Homodimer.

It localises to the cytoplasm. The enzyme catalyses Hydrolyzes Xaa-Pro-|- bonds to release unblocked, N-terminal dipeptides from substrates including Ala-Pro-|-p-nitroanilide and (sequentially) Tyr-Pro-|-Phe-Pro-|-Gly-Pro-|-Ile.. Its function is as follows. Removes N-terminal dipeptides sequentially from polypeptides having unsubstituted N-termini provided that the penultimate residue is proline. The polypeptide is Xaa-Pro dipeptidyl-peptidase (Streptococcus pyogenes serotype M2 (strain MGAS10270)).